The primary structure comprises 73 residues: uncharacterized protein (73 aa).

The interval Met1–Ala32 is disordered.

This is an uncharacterized protein from Frog virus 3 (isolate Goorha) (FV-3).